Consider the following 196-residue polypeptide: Ras-related protein RabC (196 aa).

13 to 20 (GESGVGKS) is a binding site for GTP. Positions 35-43 (FAPTLGVDF) match the Effector region motif. GTP-binding positions include 63–67 (DTAGQ) and 121–124 (NKSD). S-geranylgeranyl cysteine attachment occurs at residues Cys195 and Cys196.

Belongs to the small GTPase superfamily. Rab family.

Its subcellular location is the cell membrane. The chain is Ras-related protein RabC (rabC) from Dictyostelium discoideum (Social amoeba).